The following is a 106-amino-acid chain: uncharacterized protein (106 aa).

The chain crosses the membrane as a helical span at residues 85 to 101; it reads AVALVLLCVSHHLTYLP.

It localises to the membrane. This is an uncharacterized protein from Saccharomyces cerevisiae (strain ATCC 204508 / S288c) (Baker's yeast).